Here is a 637-residue protein sequence, read N- to C-terminus: Threonine--tRNA ligase (637 aa).

The 61-residue stretch at 1–61 (MPNVKLPDGN…KEDCSLIIVT (61 aa)) folds into the TGS domain. Residues 242–533 (DHRKLGKALD…LIEHYAGKLP (292 aa)) form a catalytic region. Zn(2+)-binding residues include Cys-333, His-384, and His-510.

The protein belongs to the class-II aminoacyl-tRNA synthetase family. In terms of assembly, homodimer. The cofactor is Zn(2+).

Its subcellular location is the cytoplasm. It carries out the reaction tRNA(Thr) + L-threonine + ATP = L-threonyl-tRNA(Thr) + AMP + diphosphate + H(+). In terms of biological role, catalyzes the attachment of threonine to tRNA(Thr) in a two-step reaction: L-threonine is first activated by ATP to form Thr-AMP and then transferred to the acceptor end of tRNA(Thr). Also edits incorrectly charged L-seryl-tRNA(Thr). The protein is Threonine--tRNA ligase of Legionella pneumophila (strain Paris).